We begin with the raw amino-acid sequence, 561 residues long: Centromere protein T (561 aa).

The segment at 1 to 83 (MADHNPDSDS…HIQASGHLEE (83 aa)) is disordered. The segment covering 18-27 (RVLDTADPRT) has biased composition (basic and acidic residues). A compositionally biased stretch (low complexity) spans 34–46 (ARAGARRALLETA). Ser47 carries the phosphoserine modification. Thr85 is modified (phosphothreonine). The interval 93–421 (ILLTAPESSI…RHHQFLEPAP (329 aa)) is flexible stalk domain. Disordered stretches follow at residues 256 to 292 (HSLP…PGKP) and 333 to 457 (AEKK…DPHK). The span at 276–288 (KTQSSGPGLQKNS) shows a compositional bias: polar residues. Phosphoserine is present on residues Ser343, Ser345, and Ser356. Basic and acidic residues predominate over residues 357–367 (RVEEAEGHTEV). Residues Ser373, Ser385, Ser386, and Ser397 each carry the phosphoserine modification. Residues 395–407 (AASPESASSTPES) show a composition bias toward low complexity.

This sequence belongs to the CENP-T/CNN1 family. In terms of assembly, component of the CENPA-CAD complex, composed of CENPI, CENPK, CENPL, CENPO, CENPP, CENPQ, CENPR and CENPS. The CENPA-CAD complex is probably recruited on centromeres by the CENPA-NAC complex, at least composed of CENPA, CENPC, CENPH, CENPM, CENPN, CENPT and CENPU. Identified in a centromeric complex containing histones H2A, H2B, H3 and H4, and at least CENPA, CENPB, CENPC, CENPT, CENPN, HJURP, SUPT16H, SSRP1 and RSF1. Interacts (via N-terminus) with the NDC80 complex. Heterodimer with CENPW; this dimer coassembles with CENPS-CENPX heterodimers at centromeres to form the tetrameric CENP-T-W-S-X complex. Dynamically phosphorylated at Ser-47 and probably also other sites during the cell cycle. Phosphorylated at Ser-47 during G2 phase, metaphase and anaphase, but not during telophase or G1 phase.

It is found in the nucleus. Its subcellular location is the chromosome. The protein resides in the centromere. The protein localises to the kinetochore. In terms of biological role, component of the CENPA-NAC (nucleosome-associated) complex, a complex that plays a central role in assembly of kinetochore proteins, mitotic progression and chromosome segregation. The CENPA-NAC complex recruits the CENPA-CAD (nucleosome distal) complex and may be involved in incorporation of newly synthesized CENPA into centromeres. Part of a nucleosome-associated complex that binds specifically to histone H3-containing nucleosomes at the centromere, as opposed to nucleosomes containing CENPA. Component of the heterotetrameric CENP-T-W-S-X complex that binds and supercoils DNA, and plays an important role in kinetochore assembly. CENPT has a fundamental role in kinetochore assembly and function. It is one of the inner kinetochore proteins, with most further proteins binding downstream. Required for normal chromosome organization and normal progress through mitosis. This chain is Centromere protein T (CENPT), found in Homo sapiens (Human).